The chain runs to 510 residues: MTNDPGSGFAAVWNAVVAELNGEPNTDGDAGTGTTLTSPLTPQQRAWLNLVQPLTIVEGFALLSVPSSFVQNEIERHLRTPITAALSRRLGQQIQLGVRIAPPPADDDDDSVAAAVEDPGLEASPETSQEVSDEIDDFGENAPNSRQSWPTHFKKRSTDADTSASAGGTSLNRRYTFDTFVIGASNRFAHAATLAIAEAPARAYNPLFIWGESGLGKTHLLHAAGNYAQRLFPGMRVKYVSTEEFTNDFINSLRDDRKVAFKRSYRDVDVLLVDDIQFIEGKEGIQEEFFHTFNTLHNANKQIVISSDRPPKQLATLEDRLRTRFEWGLITDVQPPELETRIAILRKKAQMERLAVPDDVLELIASSIERNIRELEGALIRVTAFASLNKTPIDKALAEIVLRDLIADAGTMQISAATIMAATAEYFDTTVEELRGPGKTRALAQSRQIAMYLCRELTDLSLPKIGQAFGRDHTTVMYAQRKILSEMAERREVFDHVKELTTRIRQRSKR.

The interval 1–107 (MTNDPGSGFA…VRIAPPPADD (107 aa)) is domain I, interacts with DnaA modulators. Residues 107–169 (DDDDSVAAAV…ADTSASAGGT (63 aa)) are domain II. The tract at residues 119 to 168 (PGLEASPETSQEVSDEIDDFGENAPNSRQSWPTHFKKRSTDADTSASAGG) is disordered. The segment at 170–386 (SLNRRYTFDT…GALIRVTAFA (217 aa)) is domain III, AAA+ region. The ATP site is built by Gly-214, Gly-216, Lys-217, and Thr-218. Positions 387–510 (SLNKTPIDKA…TTRIRQRSKR (124 aa)) are domain IV, binds dsDNA.

Belongs to the DnaA family. Oligomerizes as a right-handed, spiral filament on DNA at oriC.

The protein resides in the cytoplasm. Functionally, plays an essential role in the initiation and regulation of chromosomal replication. ATP-DnaA binds to the origin of replication (oriC) to initiate formation of the DNA replication initiation complex once per cell cycle. Binds the DnaA box (a 9 base pair repeat at the origin) and separates the double-stranded (ds)DNA. Forms a right-handed helical filament on oriC DNA; dsDNA binds to the exterior of the filament while single-stranded (ss)DNA is stabiized in the filament's interior. The ATP-DnaA-oriC complex binds and stabilizes one strand of the AT-rich DNA unwinding element (DUE), permitting loading of DNA polymerase. After initiation quickly degrades to an ADP-DnaA complex that is not apt for DNA replication. Binds acidic phospholipids. The chain is Chromosomal replication initiator protein DnaA from Mycobacterium marinum (strain ATCC BAA-535 / M).